A 388-amino-acid chain; its full sequence is Transcriptional regulatory protein EmbR (388 aa).

Positions 2-105 form a DNA-binding region, ompR/PhoB-type; sequence AGSATVEKRL…AAPPGYRLSI (104 aa). One can recognise an FHA domain in the interval 308–357; the sequence is TRIGRLHDNDIVLDSANVSRHHAVIVDTGTNYVINDLRSSNGVHVQHERI.

It belongs to the AfsR/DnrI/RedD regulatory family. Phosphorylated on threonine residue(s).

Functionally, positively regulates the transcription of the embCAB operon. Exhibits ATPase and GTPase activities. This Mycobacterium bovis (strain ATCC BAA-935 / AF2122/97) protein is Transcriptional regulatory protein EmbR (embR).